A 142-amino-acid chain; its full sequence is Non-specific lipid transfer protein GPI-anchored 34 (142 aa).

The first 22 residues, 1–22 (MAVAVTAVLFLAVVIAPQWTET), serve as a signal peptide directing secretion. Positions 21–43 (ETKKPPRPSDTSDTSGTSGRDRR) are disordered. Positions 29–38 (SDTSDTSGTS) are enriched in low complexity. Intrachain disulfides connect Cys46/Cys85, Cys57/Cys69, Cys70/Cys106, and Cys83/Cys114. Asn120 is lipidated: GPI-anchor amidated asparagine. A propeptide spans 121–142 (GGATKKIVASMGLFGVVASLFF) (removed in mature form).

The protein belongs to the plant LTP family.

It is found in the cell membrane. Probable lipid transfer protein. This Arabidopsis thaliana (Mouse-ear cress) protein is Non-specific lipid transfer protein GPI-anchored 34.